A 399-amino-acid polypeptide reads, in one-letter code: Carbamoyl phosphate synthase small chain (399 aa).

Residues 1 to 206 (MTQTIPSPKP…NKGYKTNNDA (206 aa)) form a CPSase region. The L-glutamine site is built by serine 60, glycine 258, and glycine 260. The 189-residue stretch at 210-398 (HIVAIDYGIK…FNLIMDYKKT (189 aa)) folds into the Glutamine amidotransferase type-1 domain. Residue cysteine 287 is the Nucleophile of the active site. The L-glutamine site is built by leucine 288, glutamine 291, asparagine 329, glycine 331, and phenylalanine 332. Residues histidine 371 and glutamate 373 contribute to the active site.

Belongs to the CarA family. Composed of two chains; the small (or glutamine) chain promotes the hydrolysis of glutamine to ammonia, which is used by the large (or ammonia) chain to synthesize carbamoyl phosphate. Tetramer of heterodimers (alpha,beta)4.

It catalyses the reaction hydrogencarbonate + L-glutamine + 2 ATP + H2O = carbamoyl phosphate + L-glutamate + 2 ADP + phosphate + 2 H(+). The catalysed reaction is L-glutamine + H2O = L-glutamate + NH4(+). Its pathway is amino-acid biosynthesis; L-arginine biosynthesis; carbamoyl phosphate from bicarbonate: step 1/1. The protein operates within pyrimidine metabolism; UMP biosynthesis via de novo pathway; (S)-dihydroorotate from bicarbonate: step 1/3. Its function is as follows. Small subunit of the glutamine-dependent carbamoyl phosphate synthetase (CPSase). CPSase catalyzes the formation of carbamoyl phosphate from the ammonia moiety of glutamine, carbonate, and phosphate donated by ATP, constituting the first step of 2 biosynthetic pathways, one leading to arginine and/or urea and the other to pyrimidine nucleotides. The small subunit (glutamine amidotransferase) binds and cleaves glutamine to supply the large subunit with the substrate ammonia. In Bartonella henselae (strain ATCC 49882 / DSM 28221 / CCUG 30454 / Houston 1) (Rochalimaea henselae), this protein is Carbamoyl phosphate synthase small chain.